Consider the following 217-residue polypeptide: Large ribosomal subunit protein eL6 (217 aa).

The protein belongs to the eukaryotic ribosomal protein eL6 family. In terms of assembly, component of the large ribosomal subunit. May bind IPO9 with low affinity.

The protein resides in the cytoplasm. It localises to the cytosol. It is found in the rough endoplasmic reticulum. Functionally, component of the large ribosomal subunit. The protein is Large ribosomal subunit protein eL6 (rpl-6) of Caenorhabditis elegans.